The chain runs to 253 residues: Sec-independent protein translocase protein TatC (253 aa).

The next 5 helical transmembrane spans lie at 19 to 39 (ILIIVVFFVIALVVGFFLATP), 70 to 90 (FAFTSAFILVFPIILYQLWAF), 109 to 129 (IAFFLFLGGLSFAYFILFPFL), 154 to 174 (FLFQITMPFGVLFQLPVVVMF), and 194 to 214 (FFVLLVVAGFITPPELISHLM).

Belongs to the TatC family. Forms a complex with TatA.

The protein resides in the cell membrane. Functionally, part of the twin-arginine translocation (Tat) system that transports large folded proteins containing a characteristic twin-arginine motif in their signal peptide across membranes. In Halalkalibacterium halodurans (strain ATCC BAA-125 / DSM 18197 / FERM 7344 / JCM 9153 / C-125) (Bacillus halodurans), this protein is Sec-independent protein translocase protein TatC.